A 119-amino-acid polypeptide reads, in one-letter code: Beta-2-microglobulin (119 aa).

Residues 1 to 20 form the signal peptide; that stretch reads MFRSVALAVLALLFLSGLEA. Residues 25–114 form the Ig-like C1-type domain; sequence PKIQVYSRHP…VTLSGPRTVK (90 aa). Residues Cys45 and Cys100 are joined by a disulfide bond.

Belongs to the beta-2-microglobulin family. As to quaternary structure, heterodimer of an alpha chain and a beta chain. Beta-2-microglobulin is the beta-chain of major histocompatibility complex class I molecules.

The protein localises to the secreted. In terms of biological role, component of the class I major histocompatibility complex (MHC). Involved in the presentation of peptide antigens to the immune system. This Chlorocebus aethiops (Green monkey) protein is Beta-2-microglobulin (B2M).